A 350-amino-acid chain; its full sequence is Phosphotriesterase-related protein (350 aa).

Histidine 24, histidine 26, glutamate 170, histidine 202, histidine 231, and aspartate 299 together coordinate a divalent metal cation.

It belongs to the metallo-dependent hydrolases superfamily. Phosphotriesterase family. It depends on a divalent metal cation as a cofactor.

The polypeptide is Phosphotriesterase-related protein (Nematostella vectensis (Starlet sea anemone)).